The sequence spans 157 residues: Root allergen protein (157 aa).

It belongs to the BetVI family.

The chain is Root allergen protein from Taraxacum officinale (Common dandelion).